Here is a 278-residue protein sequence, read N- to C-terminus: Small ribosomal subunit protein uS3 (278 aa).

One can recognise a KH type-2 domain in the interval 38-106 (IRKLLATGLE…QVQLNILEVK (69 aa)). A disordered region spans residues 215–278 (AAAAPAGADR…AAGQPETTES (64 aa)). Residues 238 to 278 (SGASGTTATSTDAGRAATEEAPATDAAATAPAAGQPETTES) are compositionally biased toward low complexity.

It belongs to the universal ribosomal protein uS3 family. Part of the 30S ribosomal subunit. Forms a tight complex with proteins S10 and S14.

Its function is as follows. Binds the lower part of the 30S subunit head. Binds mRNA in the 70S ribosome, positioning it for translation. The polypeptide is Small ribosomal subunit protein uS3 (Mycolicibacterium gilvum (strain PYR-GCK) (Mycobacterium gilvum (strain PYR-GCK))).